The primary structure comprises 1001 residues: Sarcoplasmic/endoplasmic reticulum calcium ATPase 1 (1001 aa).

Transmembrane regions (helical) follow at residues L49–A69, E90–R110, D254–L273, and F296–A313. The Ca(2+) site is built by V304, A305, I307, and E309. D351 functions as the 4-aspartylphosphate intermediate in the catalytic mechanism. Mg(2+) contacts are provided by D351 and T353. T353 is an ATP binding site. T441 carries the post-translational modification Phosphothreonine. Residues E442, R489, K515, and R560 each contribute to the ATP site. T569 carries the post-translational modification Phosphothreonine. S581 bears the Phosphoserine mark. ATP-binding residues include T625, G626, D627, R678, and K684. Residue D703 participates in Mg(2+) binding. N706 is an ATP binding site. Transmembrane regions (helical) follow at residues K758–L777, I788–G808, and I829–A851. Ca(2+)-binding residues include N768, E771, N796, T799, and D800. The interaction with PLN stretch occupies residues I788–G808. C876 and C888 form a disulfide bridge. Helical transmembrane passes span T898–S917, I931–Y949, and T965–K985. E908 contributes to the Ca(2+) binding site. The segment at W932–L943 is interaction with PLN.

This sequence belongs to the cation transport ATPase (P-type) (TC 3.A.3) family. Type IIA subfamily. As to quaternary structure, interacts with sarcolipin (SLN). Interacts with phospholamban (PLN). Interacts with myoregulin (MRLN). Interacts with DWORF. Interacts with VMP1. The cofactor is Mg(2+). In terms of tissue distribution, skeletal muscle, fast twitch muscle (type II) fibers.

It is found in the endoplasmic reticulum membrane. Its subcellular location is the sarcoplasmic reticulum membrane. The enzyme catalyses Ca(2+)(in) + ATP + H2O = Ca(2+)(out) + ADP + phosphate + H(+). With respect to regulation, inhibited by sarcolipin (SLN) and myoregulin (MRLN). Has also been shown to be reversibly inhibited by phospholamban (PLN) at low calcium concentrations in vitro. Dephosphorylated PLN decreases the apparent affinity of the ATPase for calcium and this inhibition is regulated by the phosphorylation of PLN in vitro. Enhanced by DWORF; DWORF increases activity by displacing sarcolipin (SLN), phospholamban (PLN) and myoregulin (MRLN). In terms of biological role, key regulator of striated muscle performance by acting as the major Ca(2+) ATPase responsible for the reuptake of cytosolic Ca(2+) into the sarcoplasmic reticulum. Catalyzes the hydrolysis of ATP coupled with the translocation of calcium from the cytosol to the sarcoplasmic reticulum lumen. Contributes to calcium sequestration involved in muscular excitation/contraction. This is Sarcoplasmic/endoplasmic reticulum calcium ATPase 1 from Homo sapiens (Human).